The sequence spans 488 residues: MTKNNETGWNLDNSYTTLPQSFYTEIPPTPVSSPELVKLNHSLAISLGLTPEELKKEAEIAIFAGNALPEGAHPLAQAYAGHQFGHFNMLGDGRALLIGEQITPSGERFDIQLKGSGPTPYSRRGDGRAALGPMLREYIISEAMYALDIPTTRSLAVVTTGEPTYRETKLPGAILTRVASSHIRVGTFQYAAARGSIEDLKSLADYTIKRHYPEIESHENQYTALLQEVIKRQASLIAKWQLVGFIHGVMNTDNITISGETIDYGPCAFMDNYDQGTVFSSIDTQGRYAYGNQPYMAAWDLARLAESLIPILHEDEEEALKIAQDEISKFSVQYEKQWFLGMKKKLGLFSNEEQAHSLIEQLLKMMEKYKADYTNTFRSLTLDAIENTALFESPEFKEWYKLWQSRLDRQEQSKENAYEMMKNNNPSIIPRNHRVEEALEAAVTNDDYSVMEKLLEALSNPYAYSTDQEEYCIPPAPTNRPYRTFCGT.

ATP-binding residues include Gly-91, Gly-93, Arg-94, Lys-114, Asp-126, Gly-127, Arg-177, and Arg-184. The Proton acceptor role is filled by Asp-253. Mg(2+)-binding residues include Asn-254 and Asp-263. Asp-263 is a binding site for ATP.

Belongs to the SELO family. Requires Mg(2+) as cofactor. Mn(2+) is required as a cofactor.

It catalyses the reaction L-seryl-[protein] + ATP = 3-O-(5'-adenylyl)-L-seryl-[protein] + diphosphate. The enzyme catalyses L-threonyl-[protein] + ATP = 3-O-(5'-adenylyl)-L-threonyl-[protein] + diphosphate. It carries out the reaction L-tyrosyl-[protein] + ATP = O-(5'-adenylyl)-L-tyrosyl-[protein] + diphosphate. The catalysed reaction is L-histidyl-[protein] + UTP = N(tele)-(5'-uridylyl)-L-histidyl-[protein] + diphosphate. It catalyses the reaction L-seryl-[protein] + UTP = O-(5'-uridylyl)-L-seryl-[protein] + diphosphate. The enzyme catalyses L-tyrosyl-[protein] + UTP = O-(5'-uridylyl)-L-tyrosyl-[protein] + diphosphate. Nucleotidyltransferase involved in the post-translational modification of proteins. It can catalyze the addition of adenosine monophosphate (AMP) or uridine monophosphate (UMP) to a protein, resulting in modifications known as AMPylation and UMPylation. The protein is Protein nucleotidyltransferase YdiU of Bacillus cereus (strain B4264).